We begin with the raw amino-acid sequence, 281 residues long: UPF0294 protein VP2298 (281 aa).

Belongs to the UPF0294 family.

It localises to the cytoplasm. The sequence is that of UPF0294 protein VP2298 from Vibrio parahaemolyticus serotype O3:K6 (strain RIMD 2210633).